The primary structure comprises 32 residues: Trypsin inhibitor 2b (32 aa).

Disulfide bonds link Cys-3-Cys-20, Cys-10-Cys-22, and Cys-16-Cys-29.

The protein belongs to the protease inhibitor I7 (squash-type serine protease inhibitor) family.

It localises to the secreted. In terms of biological role, inhibits trypsin. The polypeptide is Trypsin inhibitor 2b (Cucumis sativus (Cucumber)).